Reading from the N-terminus, the 667-residue chain is Receptor for retinol uptake STRA6 (667 aa).

The segment covering 1 to 13 (MSSQPAGNQTSPG) has biased composition (polar residues). The disordered stretch occupies residues 1 to 22 (MSSQPAGNQTSPGPTEDYSYGS). Residues 1–50 (MSSQPAGNQTSPGPTEDYSYGSWYIDEPQGGEELQPEGEVPSCHTSIPPS) lie on the Extracellular side of the membrane. N-linked (GlcNAc...) asparagine glycosylation is present at asparagine 8. The helical transmembrane segment at 51–71 (LYHACLASLSILVLLLLAMLV) threads the bilayer. At 72–98 (RRRQLWPDCVRGRPGLPSPVDFLAGDR) the chain is on the cytoplasmic side. The helical transmembrane segment at 99 to 119 (PQAVPAAVFVVLFSSLCLLLP) threads the bilayer. Topologically, residues 120 to 144 (DEDPLPFLTLASAPSQDGKTEAPRG) are extracellular. Residues 145–165 (AWKILGLFYYAALCYPLAACA) traverse the membrane as a helical segment. Over 166 to 168 (TAG) the chain is Cytoplasmic. Residues 169–189 (HTAAHLLGSTLSWAHLGVQVW) traverse the membrane as a helical segment. The Extracellular segment spans residues 190 to 205 (QRAECPQVPKIYKYYS). A helical transmembrane segment spans residues 206–226 (LLASLPLLLGLGFLSLWYPVQ). The Cytoplasmic segment spans residues 227–295 (LVRSFSCRTG…PQPGFRLPLK (69 aa)). Positions 235–293 (TGAGSKGLQSSYSEEYLRNLLCRKKLGSSSHTSKHGFLSWAWVCLRHCIYTPQPGFRLP) are interaction with RBP1. A helical membrane pass occupies residues 296-316 (LVLSATLTGTAIYQVALLLLV). The Extracellular segment spans residues 317-367 (GMVPNIQKVRAGVTTDVSYLLAGFGIVLSEDKQEVVELVKHHLWALEVCYI). Residues 368–388 (SALVLSCSLTFLVLMRSLVTH) form a helical membrane-spanning segment. Residues 389–422 (RTNLRALHRGAALDSSPLHRSPHPSRRAIFCWMS) lie on the Cytoplasmic side of the membrane. The helical transmembrane segment at 423–443 (FSAYQTAFICLGLLVQQIIFF) threads the bilayer. Over 444–473 (LGTTALAFLVLMPVLHGRNLLLFRSLESSW) the chain is Extracellular. Residues 474 to 494 (PFWLTLALAVILQSMAAHWVF) traverse the membrane as a helical segment. The Cytoplasmic segment spans residues 495–509 (LETHDGHPQLTNRRV). An intramembrane region (helical) is located at residues 510–547 (LYAATFLLFPLNVLVGAMVATWRVLLSALYNAIHLGQM). The Cytoplasmic portion of the chain corresponds to 548 to 667 (DLSLLPPRAA…ALLGANGAQP (120 aa)). Tyrosine 643 is subject to Phosphotyrosine.

In terms of assembly, homodimer. Interacts with JAK2 and STAT5. Interacts (via extracellular domains) with RBP4. Interacts (via cytoplasmic domains) with RBP1. Phosphorylated on tyrosine residues in response to RBP4 binding. Phosphorylation requires the presence of LRAT, suggesting it may be triggered by the uptake of retinol that is then metabolized within the cell to retinoids that function as signaling molecules.

It localises to the cell membrane. Functionally, functions as a retinol transporter. Accepts all-trans retinol from the extracellular retinol-binding protein RBP4, facilitates retinol transport across the cell membrane, and then transfers retinol to the cytoplasmic retinol-binding protein RBP1. Retinol uptake is enhanced by LRAT, an enzyme that converts retinol to all-trans retinyl esters, the storage forms of vitamin A. Contributes to the activation of a signaling cascade that depends on retinol transport and LRAT-dependent generation of retinol metabolites that then trigger activation of JAK2 and its target STAT5, and ultimately increase the expression of SOCS3 and inhibit cellular responses to insulin. Important for the homeostasis of vitamin A and its derivatives, such as retinoic acid. STRA6-mediated transport is particularly important in the eye, and under conditions of dietary vitamin A deficiency. Does not transport retinoic acid. The polypeptide is Receptor for retinol uptake STRA6 (STRA6) (Pongo abelii (Sumatran orangutan)).